The sequence spans 479 residues: Serralysin C (479 aa).

Positions 1-17 (MGKNLSLRQDDAQHALS) are excised as a propeptide. H188 contacts Zn(2+). The active site involves E189. Residues H192 and Y228 each coordinate Zn(2+). Residues R265, G267, D297, G299, G300, D302, T339, E341, G346, G348, D350, N355, A357, N359, G363, G364, A365, G366, D368, G372, G373, G375, D377, G381, G382, A383, G384, D386, D395, D402, and D412 each coordinate Ca(2+). 3 Hemolysin-type calcium-binding repeats span residues 344-361 (IGGS…DNIL), 362-379 (QGGA…ADTL), and 380-397 (YGGA…QDST).

This sequence belongs to the peptidase M10B family. Ca(2+) is required as a cofactor. Requires Zn(2+) as cofactor.

The protein localises to the secreted. The catalysed reaction is Preferential cleavage of bonds with hydrophobic residues in P1'.. In Dickeya chrysanthemi (Pectobacterium chrysanthemi), this protein is Serralysin C (prtC).